Consider the following 822-residue polypeptide: ATP-dependent zinc metalloprotease FtsH (822 aa).

The Cytoplasmic segment spans residues 1-76; the sequence is MEFNKLELLI…NQKEPGKARK (76 aa). Positions 44-54 are enriched in polar residues; sequence SLDQPSDAPSN. Residues 44-71 form a disordered region; it reads SLDQPSDAPSNNKKRNLDQPDNPNQKEP. Residues 77–97 traverse the membrane as a helical segment; it reads IIWSFIIIILVLGVLALIILS. Over 98–251 the chain is Extracellular; that stretch reads GFSFSATSLN…QSMSLPTSYS (154 aa). A helical membrane pass occupies residues 252–272; that stretch reads FYTAASLVLSILPFILLIGII. Residues 273–822 lie on the Cytoplasmic side of the membrane; sequence YYSMRKMGQA…SKESSSDKKK (550 aa). 347–354 serves as a coordination point for ATP; it reads GPPGTGKT. Histidine 569 provides a ligand contact to Zn(2+). Glutamate 570 is a catalytic residue. Residues histidine 573 and aspartate 648 each contribute to the Zn(2+) site. The span at 758-794 shows a compositional bias: basic and acidic residues; the sequence is KKELEEKKKAEDLIRKAKKESEASSKEEKEMDVEKKV. The segment at 758 to 822 is disordered; sequence KKELEEKKKA…SKESSSDKKK (65 aa). Residues 796–805 show a composition bias toward low complexity; the sequence is KPSASSTEPT. A compositionally biased stretch (basic and acidic residues) spans 812-822; sequence PSKESSSDKKK.

This sequence in the central section; belongs to the AAA ATPase family. In the C-terminal section; belongs to the peptidase M41 family. In terms of assembly, homohexamer. It depends on Zn(2+) as a cofactor.

The protein resides in the cell membrane. Its function is as follows. Acts as a processive, ATP-dependent zinc metallopeptidase for both cytoplasmic and membrane proteins. Plays a role in the quality control of integral membrane proteins. This Malacoplasma penetrans (strain HF-2) (Mycoplasma penetrans) protein is ATP-dependent zinc metalloprotease FtsH.